The primary structure comprises 33 residues: Photosystem II reaction center protein Psb30 (33 aa).

The chain crosses the membrane as a helical span at residues 5–25; it reads LIGQLVTVALVVGAGPIIIGA.

This sequence belongs to the Psb30/Ycf12 family. As to quaternary structure, PSII is composed of 1 copy each of membrane proteins PsbA, PsbB, PsbC, PsbD, PsbE, PsbF, PsbH, PsbI, PsbJ, PsbK, PsbL, PsbM, PsbT, PsbX, PsbY, PsbZ, Psb30/Ycf12, peripheral proteins of the oxygen-evolving complex and a large number of cofactors. It forms dimeric complexes.

Its subcellular location is the plastid. It localises to the chloroplast thylakoid membrane. Its function is as follows. A core subunit of photosystem II (PSII), probably helps stabilize the reaction center. The sequence is that of Photosystem II reaction center protein Psb30 from Ostreococcus tauri.